A 138-amino-acid chain; its full sequence is Large ribosomal subunit protein bL19 (138 aa).

The protein belongs to the bacterial ribosomal protein bL19 family.

This protein is located at the 30S-50S ribosomal subunit interface and may play a role in the structure and function of the aminoacyl-tRNA binding site. This chain is Large ribosomal subunit protein bL19, found in Rickettsia africae (strain ESF-5).